The sequence spans 556 residues: Glutamine--tRNA ligase (556 aa).

Positions 34 to 44 match the 'HIGH' region motif; sequence PEPNGYLHIGH. ATP contacts are provided by residues 35 to 37 and 41 to 47; these read EPN and HIGHAKS. Residues D67 and Y212 each coordinate L-glutamine. Residues T231, 261-262, and 269-271 contribute to the ATP site; these read RL and MSK. The 'KMSKS' region motif lies at 268–272; sequence VMSKR.

It belongs to the class-I aminoacyl-tRNA synthetase family. In terms of assembly, monomer.

It localises to the cytoplasm. The catalysed reaction is tRNA(Gln) + L-glutamine + ATP = L-glutaminyl-tRNA(Gln) + AMP + diphosphate. The sequence is that of Glutamine--tRNA ligase from Vibrio cholerae serotype O1 (strain ATCC 39315 / El Tor Inaba N16961).